The sequence spans 404 residues: MELFRNTNIDFLGKKWYFLAFSLVFSVAGLISMGARYAKTGTAVPLGVDFKGGTLVYVKFAQTPNLGDIRAAMDRSGLKDPKIQTYGGPANNEVLIALEQKETSEQALDAGKNTIIKALETNPASGKNDLNNVGSTTIRDYLMSKDPLHEVVDPGAKYQQIASQIVDYRDKERGGVLSSVDELQGHVPADVVNALKTDYFTSGFGVRNVEIVGPQVGKQLSNQALLATLYSLGGMLVYLWFRFELIYGIGAVVACFHDTIITVGAFSLLNRDISLTVVAAILTLIGYSMNDTIVVYDRIRENIKLLRRESLADIVNKSINQTLSRTILTSGLTFLTVLSLYVFGGEVLRGFSLALVIGILIGTYSSIAVAAPMLVAYQEWRGHRGTAALPGPAPRKNDRVKVKA.

6 consecutive transmembrane segments (helical) span residues lysine 15–alanine 35, leucine 225–leucine 245, isoleucine 246–phenylalanine 266, leucine 275–valine 295, isoleucine 327–valine 347, and leucine 355–valine 375.

This sequence belongs to the SecD/SecF family. SecF subfamily. In terms of assembly, forms a complex with SecD. Part of the essential Sec protein translocation apparatus which comprises SecA, SecYEG and auxiliary proteins SecDF. Other proteins may also be involved.

It localises to the cell inner membrane. Part of the Sec protein translocase complex. Interacts with the SecYEG preprotein conducting channel. SecDF uses the proton motive force (PMF) to complete protein translocation after the ATP-dependent function of SecA. The polypeptide is Protein translocase subunit SecF (Koribacter versatilis (strain Ellin345)).